Consider the following 388-residue polypeptide: Trichodiene synthase (388 aa).

Mg(2+)-binding residues include D109, E173, N234, S238, E242, and D248. The tract at residues 109–113 (DDSRE) is aspartate-rich domain.

Belongs to the trichodiene synthase family. It depends on Mg(2+) as a cofactor. Requires Mn(2+) as cofactor.

It catalyses the reaction (2E,6E)-farnesyl diphosphate = trichodiene + diphosphate. It participates in sesquiterpene biosynthesis; trichothecene biosynthesis. Trichodiene synthase; part of the gene cluster that mediates the production of the antimicrobial trichothecene harzianum A (HA) that plays a role in Botrytis cinerea antagonistic activity and plant defense priming. The biosynthesis of harzianum A begins with the cyclization of farnesyl diphosphate to trichodiene and is catalyzed by the trichodiene synthase TRI5. Trichodiene undergoes a series of oxygenations catalyzed by the cytochrome P450 monooxygenase TRI4. TRI4 controls the addition of 3 oxygens at C-2, C-11, and the C-12, C-13-epoxide to form the intermediate isotrichodiol. Isotrichodiol then undergoes a non-enzymatic isomerization and cyclization to form 12,13-epoxytrichothec-9-ene (EPT) which is further converted to trichodermol by the cytochrome P450 monooxygenase TRI11 via C-4 hydroxylation. The last step of HA synthesis is esterification of an octatriendioyl moiety to the C-4 oxygen of trichodermol. The octatriendioyl moiety is probably produced by the polyketide synthase TRI17 and the esterification performed by the trichothecene O-acetyltransferase TRI3. In Trichoderma arundinaceum, this protein is Trichodiene synthase.